Here is a 324-residue protein sequence, read N- to C-terminus: Beta-ketoacyl-[acyl-carrier-protein] synthase III (324 aa).

Catalysis depends on residues Cys112 and His249. The segment at 250-254 is ACP-binding; it reads QANRR. The active site involves Asn279.

It belongs to the thiolase-like superfamily. FabH family. As to quaternary structure, homodimer.

It localises to the cytoplasm. It catalyses the reaction malonyl-[ACP] + acetyl-CoA + H(+) = 3-oxobutanoyl-[ACP] + CO2 + CoA. The protein operates within lipid metabolism; fatty acid biosynthesis. Its function is as follows. Catalyzes the condensation reaction of fatty acid synthesis by the addition to an acyl acceptor of two carbons from malonyl-ACP. Catalyzes the first condensation reaction which initiates fatty acid synthesis and may therefore play a role in governing the total rate of fatty acid production. Possesses both acetoacetyl-ACP synthase and acetyl transacylase activities. Its substrate specificity determines the biosynthesis of branched-chain and/or straight-chain of fatty acids. The chain is Beta-ketoacyl-[acyl-carrier-protein] synthase III from Streptococcus pyogenes serotype M3 (strain ATCC BAA-595 / MGAS315).